Here is a 383-residue protein sequence, read N- to C-terminus: Queuine tRNA-ribosyltransferase (383 aa).

Aspartate 90 acts as the Proton acceptor in catalysis. Residues 90-94 (DSGGF), aspartate 144, glutamine 193, and glycine 227 each bind substrate. The RNA binding stretch occupies residues 258 to 264 (GVGTPED). The Nucleophile role is filled by aspartate 277. An RNA binding; important for wobble base 34 recognition region spans residues 282–286 (TRNAR). Cysteine 315, cysteine 317, cysteine 320, and histidine 346 together coordinate Zn(2+).

This sequence belongs to the queuine tRNA-ribosyltransferase family. In terms of assembly, homodimer. Within each dimer, one monomer is responsible for RNA recognition and catalysis, while the other monomer binds to the replacement base PreQ1. It depends on Zn(2+) as a cofactor.

It catalyses the reaction 7-aminomethyl-7-carbaguanine + guanosine(34) in tRNA = 7-aminomethyl-7-carbaguanosine(34) in tRNA + guanine. It functions in the pathway tRNA modification; tRNA-queuosine biosynthesis. Catalyzes the base-exchange of a guanine (G) residue with the queuine precursor 7-aminomethyl-7-deazaguanine (PreQ1) at position 34 (anticodon wobble position) in tRNAs with GU(N) anticodons (tRNA-Asp, -Asn, -His and -Tyr). Catalysis occurs through a double-displacement mechanism. The nucleophile active site attacks the C1' of nucleotide 34 to detach the guanine base from the RNA, forming a covalent enzyme-RNA intermediate. The proton acceptor active site deprotonates the incoming PreQ1, allowing a nucleophilic attack on the C1' of the ribose to form the product. After dissociation, two additional enzymatic reactions on the tRNA convert PreQ1 to queuine (Q), resulting in the hypermodified nucleoside queuosine (7-(((4,5-cis-dihydroxy-2-cyclopenten-1-yl)amino)methyl)-7-deazaguanosine). This Ralstonia nicotianae (strain ATCC BAA-1114 / GMI1000) (Ralstonia solanacearum) protein is Queuine tRNA-ribosyltransferase.